The following is a 460-amino-acid chain: ATP synthase subunit beta (460 aa).

ATP is bound at residue 150–157 (GGAGVGKT).

It belongs to the ATPase alpha/beta chains family. As to quaternary structure, F-type ATPases have 2 components, CF(1) - the catalytic core - and CF(0) - the membrane proton channel. CF(1) has five subunits: alpha(3), beta(3), gamma(1), delta(1), epsilon(1). CF(0) has three main subunits: a(1), b(2) and c(9-12). The alpha and beta chains form an alternating ring which encloses part of the gamma chain. CF(1) is attached to CF(0) by a central stalk formed by the gamma and epsilon chains, while a peripheral stalk is formed by the delta and b chains.

Its subcellular location is the cell inner membrane. It catalyses the reaction ATP + H2O + 4 H(+)(in) = ADP + phosphate + 5 H(+)(out). Produces ATP from ADP in the presence of a proton gradient across the membrane. The catalytic sites are hosted primarily by the beta subunits. The polypeptide is ATP synthase subunit beta (Salmonella agona (strain SL483)).